The following is a 386-amino-acid chain: Ovalbumin (386 aa).

An N-acetylglycine modification is found at Gly2. Residues 22–48 (HHANENIFYSPFTIISALAMVYLGAKD) constitute a signal peptide (not cleaved). Ser69 bears the Phosphoserine mark. The cysteines at positions 74 and 121 are disulfide-linked. 2 N-linked (GlcNAc...) asparagine glycosylation sites follow: Asn293 and Asn312. At Ser345 the chain carries Phosphoserine. Asn372 carries an N-linked (GlcNAc...) asparagine glycan.

The protein belongs to the serpin family. Ov-serpin subfamily. In terms of processing, the signal sequence is not cleaved. The functional signal for membrane translocation of ovalbumin becomes accessible when the nascent chain is 50 to 60 residues long. The hydrophobic sequence which lies between residues 27 and 43 folds back on the preceding residues to form an amphipathic hairpin structure which is the signal element recognized by the membrane. As to expression, major protein of egg white.

It is found in the secreted. In terms of biological role, storage protein of egg white. Lack protease inhibitory activity. In Meleagris gallopavo (Wild turkey), this protein is Ovalbumin (SERPINB14).